The sequence spans 430 residues: Cholecystokinin receptor type A (430 aa).

Topologically, residues 1 to 41 are extracellular; that stretch reads MDVVDSLFVNGSNITSACELGFENETLFCLDRPRPSKEWQP. Residues Asn10, Asn13, and Asn24 are each glycosylated (N-linked (GlcNAc...) asparagine). The cysteines at positions 18 and 29 are disulfide-linked. Residues 42-67 traverse the membrane as a helical segment; sequence AVQILLYSLIFLLSVLGNTLVITVLI. Topologically, residues 68–77 are cytoplasmic; sequence RNKRMRTVTN. A helical transmembrane segment spans residues 78-104; it reads IFLLSLAVSDLMLCLFCMPFNLIPSLL. Residues 105-115 are Extracellular-facing; it reads KDFIFGSAVCK. Cys114 and Cys196 are joined by a disulfide. Residues 116-137 traverse the membrane as a helical segment; sequence TTTYFMGTSVSVSTFNLVAISL. Residues 138–157 lie on the Cytoplasmic side of the membrane; that stretch reads ERYGAICKPLQSRVWQTKSH. The helical transmembrane segment at 158 to 178 threads the bilayer; sequence ALKVIAATWCLSFTIMTPYPI. The Extracellular portion of the chain corresponds to 179-210; sequence YSNLVPFTKNNNQTGNMCRFLLPNDVMQQTWH. Residue Asn190 is glycosylated (N-linked (GlcNAc...) asparagine). Residues 211–234 traverse the membrane as a helical segment; it reads TFLLLILFLIPGIVMMVAYGLISL. Residues 235–315 lie on the Cytoplasmic side of the membrane; the sequence is ELYQGIKFDA…NLMAKKRVIR (81 aa). The helical transmembrane segment at 316–336 threads the bilayer; the sequence is MLIVIVVLFFLCWMPIFSANA. Topologically, residues 337-351 are extracellular; that stretch reads WRAYDTVSAERHLSG. A helical transmembrane segment spans residues 352-375; it reads TPISFILLLSYTSSCVNPIIYCFM. At 376–430 the chain is on the cytoplasmic side; that stretch reads NKRFRLGFMATFPCCPNPGTPGVRGEMGEEEEGRTTGASLSRYSYSHMSTSAPPP. The S-palmitoyl cysteine moiety is linked to residue Cys389. The segment at 396–430 is disordered; sequence PGVRGEMGEEEEGRTTGASLSRYSYSHMSTSAPPP. The span at 413–430 shows a compositional bias: polar residues; sequence ASLSRYSYSHMSTSAPPP.

It belongs to the G-protein coupled receptor 1 family.

It localises to the cell membrane. In terms of biological role, receptor for cholecystokinin. Mediates pancreatic growth and enzyme secretion, smooth muscle contraction of the gall bladder and stomach. Has a 1000-fold higher affinity for CCK rather than for gastrin. It modulates feeding and dopamine-induced behavior in the central and peripheral nervous system. This receptor mediates its action by association with G proteins that activate a phosphatidylinositol-calcium second messenger system. The protein is Cholecystokinin receptor type A (CCKAR) of Cavia porcellus (Guinea pig).